A 122-amino-acid polypeptide reads, in one-letter code: UPF0102 protein cgR_1859 (122 aa).

The protein belongs to the UPF0102 family.

The chain is UPF0102 protein cgR_1859 from Corynebacterium glutamicum (strain R).